The sequence spans 463 residues: Glutamyl-tRNA reductase (463 aa).

Residues 49-52 (TCNR), serine 109, 114-116 (EQQ), and glutamine 120 contribute to the substrate site. Residue cysteine 50 is the Nucleophile of the active site. 196–201 (GAGAMS) provides a ligand contact to NADP(+).

It belongs to the glutamyl-tRNA reductase family. In terms of assembly, homodimer.

It catalyses the reaction (S)-4-amino-5-oxopentanoate + tRNA(Glu) + NADP(+) = L-glutamyl-tRNA(Glu) + NADPH + H(+). It functions in the pathway porphyrin-containing compound metabolism; protoporphyrin-IX biosynthesis; 5-aminolevulinate from L-glutamyl-tRNA(Glu): step 1/2. Functionally, catalyzes the NADPH-dependent reduction of glutamyl-tRNA(Glu) to glutamate 1-semialdehyde (GSA). This is Glutamyl-tRNA reductase from Corynebacterium glutamicum (strain ATCC 13032 / DSM 20300 / JCM 1318 / BCRC 11384 / CCUG 27702 / LMG 3730 / NBRC 12168 / NCIMB 10025 / NRRL B-2784 / 534).